The following is a 213-amino-acid chain: UPF0301 protein Aave_0907 (213 aa).

The tract at residues 93 to 120 (MGPSSGKQAAGEGGAQAEGEGAEESAYA) is disordered.

It belongs to the UPF0301 (AlgH) family.

This chain is UPF0301 protein Aave_0907, found in Paracidovorax citrulli (strain AAC00-1) (Acidovorax citrulli).